A 590-amino-acid polypeptide reads, in one-letter code: Mitochondrial distribution and morphology protein 34 (590 aa).

The SMP-LTD domain maps to 1-225 (MSFIFNRETF…LPSVIFNMSQ (225 aa)). The segment covering 393-405 (RRKIKMRSRKPSK) has biased composition (basic residues). The interval 393–456 (RRKIKMRSRK…APEGGPNAED (64 aa)) is disordered. Polar residues predominate over residues 413-427 (PAQNDSGTSSCSNVA).

Belongs to the MDM34 family. As to quaternary structure, component of the ER-mitochondria encounter structure (ERMES) or MDM complex, composed of MMM1, MDM10, MDM12 and MDM34.

It localises to the mitochondrion outer membrane. Functionally, component of the ERMES/MDM complex, which serves as a molecular tether to connect the endoplasmic reticulum (ER) and mitochondria. Components of this complex are involved in the control of mitochondrial shape and protein biogenesis, and function in nonvesicular lipid trafficking between the ER and mitochondria. MDM34 is required for the interaction of the ER-resident membrane protein MMM1 and the outer mitochondrial membrane-resident beta-barrel protein MDM10. The sequence is that of Mitochondrial distribution and morphology protein 34 from Eremothecium gossypii (strain ATCC 10895 / CBS 109.51 / FGSC 9923 / NRRL Y-1056) (Yeast).